A 205-amino-acid polypeptide reads, in one-letter code: Holliday junction branch migration complex subunit RuvA (205 aa).

Positions 1 to 62 (MFEYVTGYVE…EDIMALYGFK (62 aa)) are domain I. The segment at 63 to 141 (TREERLLFTK…DVVPDAFVDL (79 aa)) is domain II. The segment at 142–152 (FSDEERFDEKK) is flexible linker. The tract at residues 153 to 205 (GSSAELDEALEALRALGYAEREVSRVVPELLKESLTTDQYIKKALSLLLNGKR) is domain III.

This sequence belongs to the RuvA family. In terms of assembly, homotetramer. Forms an RuvA(8)-RuvB(12)-Holliday junction (HJ) complex. HJ DNA is sandwiched between 2 RuvA tetramers; dsDNA enters through RuvA and exits via RuvB. An RuvB hexamer assembles on each DNA strand where it exits the tetramer. Each RuvB hexamer is contacted by two RuvA subunits (via domain III) on 2 adjacent RuvB subunits; this complex drives branch migration. In the full resolvosome a probable DNA-RuvA(4)-RuvB(12)-RuvC(2) complex forms which resolves the HJ.

It localises to the cytoplasm. Functionally, the RuvA-RuvB-RuvC complex processes Holliday junction (HJ) DNA during genetic recombination and DNA repair, while the RuvA-RuvB complex plays an important role in the rescue of blocked DNA replication forks via replication fork reversal (RFR). RuvA specifically binds to HJ cruciform DNA, conferring on it an open structure. The RuvB hexamer acts as an ATP-dependent pump, pulling dsDNA into and through the RuvAB complex. HJ branch migration allows RuvC to scan DNA until it finds its consensus sequence, where it cleaves and resolves the cruciform DNA. This Bacillus cereus (strain AH187) protein is Holliday junction branch migration complex subunit RuvA.